We begin with the raw amino-acid sequence, 144 residues long: Crossover junction endodeoxyribonuclease Hjc (144 aa).

Glu-12 lines the Mg(2+) pocket. Ser-32 is a catalytic residue. Mg(2+) contacts are provided by Asp-42 and Glu-55.

Belongs to the Holliday junction resolvase Hjc family. In terms of assembly, homodimer; forms a 2:1 complex with Hel308 (Hjm). May form a complex with Holliday junction DNA, Hjc and Hjm. It depends on Mg(2+) as a cofactor.

It catalyses the reaction Endonucleolytic cleavage at a junction such as a reciprocal single-stranded crossover between two homologous DNA duplexes (Holliday junction).. Its activity is regulated as follows. Cleavage stimulated by PCNA123 and PCNA323 and by RadC2. A structure-specific endonuclease that resolves Holliday junction (HJ) intermediates during genetic recombination. Cleaves 4-way DNA junctions introducing paired nicks in opposing strands, leaving a 5'-terminal phosphate and a 3'-terminal hydroxyl group that are subsequently ligated to produce recombinant products. Inhibits the helicase activity of Hel308 (Hjm). This chain is Crossover junction endodeoxyribonuclease Hjc, found in Sulfurisphaera tokodaii (strain DSM 16993 / JCM 10545 / NBRC 100140 / 7) (Sulfolobus tokodaii).